Reading from the N-terminus, the 273-residue chain is Alcohol dehydrogenase-related 31 kDa protein (273 aa).

11-34 (YVADCGGIALETCKVLMTKNIAKL) contributes to the NAD(+) binding site. Serine 139 is a substrate binding site. Tyrosine 152 (proton acceptor) is an active-site residue.

This sequence belongs to the short-chain dehydrogenases/reductases (SDR) family.

This chain is Alcohol dehydrogenase-related 31 kDa protein (Adhr), found in Drosophila immigrans (Fruit fly).